A 437-amino-acid chain; its full sequence is Transcription factor AP-2-alpha (437 aa).

Lys-10 participates in a covalent cross-link: Glycyl lysine isopeptide (Lys-Gly) (interchain with G-Cter in SUMO); alternate. Lys-10 participates in a covalent cross-link: Glycyl lysine isopeptide (Lys-Gly) (interchain with G-Cter in SUMO2); alternate. Residues 14–107 form a disordered region; sequence CEDRHDGTSN…GQRQSQESGL (94 aa). Residues 57-62 carry the PPxY motif motif; it reads YFPPPY. 2 stretches are compositionally biased toward low complexity: residues 65 to 74 and 88 to 101; these read IYPQSQDPYS and QPQP…GQRQ. Residues Lys-177 and Lys-184 each participate in a glycyl lysine isopeptide (Lys-Gly) (interchain with G-Cter in SUMO2) cross-link. Ser-239 carries the phosphoserine; by PKA modification. The segment at 280-410 is H-S-H (helix-span-helix), dimerization; sequence RRKAANVTLL…YLTEALKAMD (131 aa). Residues 414 to 427 are compositionally biased toward polar residues; that stretch reads LSNNPNSHTDNNAK. The disordered stretch occupies residues 414–437; it reads LSNNPNSHTDNNAKSSDKEEKHRK. The span at 428–437 shows a compositional bias: basic and acidic residues; the sequence is SSDKEEKHRK.

It belongs to the AP-2 family. As to quaternary structure, binds DNA as a dimer. Can form homodimers or heterodimers with other AP-2 family members. Interacts with WWOX. Interacts with CITED4. Interacts with UBE2I. Interacts with RALBP1 in a complex also containing EPN1 and NUMB during interphase and mitosis. Interacts with KCTD1; this interaction represses transcription activation. Interacts (via C-terminus) with CITED2 (via C-terminus); the interaction stimulates TFAP2A-transcriptional activation. Interacts (via N-terminus) with EP300 (via N-terminus); the interaction requires CITED2. Interacts with KCTD15; this interaction inhibits TFAP2A transcriptional activation. In terms of processing, sumoylated on Lys-10; which inhibits transcriptional activity.

The protein resides in the nucleus. Sequence-specific DNA-binding protein that interacts with inducible viral and cellular enhancer elements to regulate transcription of selected genes. AP-2 factors bind to the consensus sequence 5'-GCCNNNGGC-3' and activate genes involved in a large spectrum of important biological functions including proper eye, face, body wall, limb and neural tube development. They also suppress a number of genes including MCAM/MUC18, C/EBP alpha and MYC. AP-2-alpha is the only AP-2 protein required for early morphogenesis of the lens vesicle. Together with the CITED2 coactivator, stimulates the PITX2 P1 promoter transcription activation. Associates with chromatin to the PITX2 P1 promoter region. This Homo sapiens (Human) protein is Transcription factor AP-2-alpha (TFAP2A).